We begin with the raw amino-acid sequence, 701 residues long: Meprin A subunit beta (701 aa).

The N-terminal stretch at 1–22 (MDLWNLSWFLFLDALLVISGLA) is a signal peptide. Positions 23 to 61 (TPENFDVDGGMDQDIFDINEGLGLDLFEGDIRLDRAQIR) are excised as a propeptide. Topologically, residues 23–652 (TPENFDVDGG…CEKRGSTRDT (630 aa)) are extracellular. One can recognise a Peptidase M12A domain in the interval 62–256 (NSIIGEKYRW…LKLNQLYNCS (195 aa)). 3 disulfide bridges follow: Cys-103/Cys-255, Cys-124/Cys-144, and Cys-265/Cys-427. His-152 is a Zn(2+) binding site. Glu-153 is a catalytic residue. His-156 and His-162 together coordinate Zn(2+). N-linked (GlcNAc...) asparagine glycans are attached at residues Asn-218, Asn-254, Asn-370, Asn-421, Asn-436, Asn-445, Asn-547, and Asn-592. Residues 260–429 (SFMDSCSFEL…INLSETRCPH (170 aa)) enclose the MAM domain. Residues 430–585 (HIWHIRNFTQ…GDDVYILLTV (156 aa)) form the MATH domain. The O-linked (GalNAc...) serine glycan is linked to Ser-593. 2 O-linked (GalNAc...) threonine glycosylation sites follow: Thr-594 and Thr-599. The segment at 595-607 (QIQLTPAPSVQDL) is required for proteolytic processing. Ser-603 carries O-linked (GalNAc...) serine glycosylation. In terms of domain architecture, EGF-like spans 604–644 (VQDLCSKTTCKNDGVCTVRDGKAECRCQSGEDWWYMGERCE). Intrachain disulfides connect Cys-608–Cys-619, Cys-613–Cys-628, and Cys-630–Cys-643. A helical transmembrane segment spans residues 653–673 (IVIAVSSTVAVFALMLIITLV). At 674–701 (SVYCTRKKYRERMSSNRPNLTPQNQHAF) the chain is on the cytoplasmic side. At Thr-694 the chain carries Phosphothreonine.

Homotetramer consisting of disulfide-linked beta subunits, or heterotetramer of two alpha and two beta subunits formed by non-covalent association of two disulfide-linked heterodimers. Interacts with MBL2 through its carbohydrate moiety. This interaction may inhibit its catalytic activity. Interacts with TSPAN8. The cofactor is Zn(2+). In terms of processing, phosphorylated by PKC at multiple sites of its cytoplasmic part. Phosphorylation dcreases activity at the cell surface, leading to diminished substrate cleavage. N-glycosylated; contains high mannose and/or complex biantennary structures. Post-translationally, O-glycosylation protect the C-terminal region from proteolytic cleavage and diminish secretion, this seems to be specific to human. In terms of processing, proteolytically activated by trypsin in the intestinal lumen and kallikrein-related peptidases in other tissues. The major site of expression is the brush border membrane of small intestinal and kidney epithelial cells.

Its subcellular location is the cell membrane. The protein resides in the secreted. It carries out the reaction Hydrolysis of proteins, including azocasein, and peptides. Hydrolysis of 5-His-|-Leu-6, 6-Leu-|-Cys-7, 14-Ala-|-Leu-15 and 19-Cys-|-Gly-20 bonds in insulin B chain.. Its activity is regulated as follows. Strongly inhibited by fetuin-A/AHSG. In terms of biological role, membrane metallopeptidase that sheds many membrane-bound proteins. Exhibits a strong preference for acidic amino acids at the P1' position. Known substrates include: FGF19, VGFA, IL1B, IL18, procollagen I and III, E-cadherin, KLK7, gastrin, ADAM10, tenascin-C. The presence of several pro-inflammatory cytokine among substrates implicate MEP1B in inflammation. It is also involved in tissue remodeling due to its capability to degrade extracellular matrix components. Also cleaves the amyloid precursor protein/APP, thereby releasing neurotoxic amyloid beta peptides. The sequence is that of Meprin A subunit beta (MEP1B) from Homo sapiens (Human).